A 152-amino-acid polypeptide reads, in one-letter code: Prostaglandin E synthase (152 aa).

Residues 1–12 are Lumenal-facing; it reads MPAHSLAMSSPA. Residues 13–41 form a helical membrane-spanning segment; sequence LPAFLLCSTLLVIKMYVVAIITGQVRLRK. A glutathione-binding site is contributed by arginine 38. Over 42–60 the chain is Cytoplasmic; that stretch reads KAFANPEDALRHGGPQYCR. A helical transmembrane segment spans residues 61–90; the sequence is SDPDVERCLRAHRNDMETIYPFLFLGFVYS. 73–77 is a binding site for glutathione; that stretch reads RNDME. Over 91–95 the chain is Lumenal; sequence FLGPN. A helical membrane pass occupies residues 96-119; sequence PFVAWMHFLVFLLGRVVHTVAYLG. The glutathione site is built by histidine 113 and tyrosine 117. The Cytoplasmic portion of the chain corresponds to 120–123; the sequence is KLRA. The helical transmembrane segment at 124–152 threads the bilayer; the sequence is PIRSVTYTLAQLPCASMALQILWEAARHL. A glutathione-binding site is contributed by 126 to 130; that stretch reads RSVTY.

Belongs to the MAPEG family. In terms of assembly, homotrimer. It depends on glutathione as a cofactor.

It is found in the membrane. Its subcellular location is the cytoplasm. It localises to the perinuclear region. It catalyses the reaction prostaglandin H2 = prostaglandin E2. It carries out the reaction 2-glyceryl-prostaglandin H2 = 2-glyceryl-prostaglandin E2. The catalysed reaction is prostaglandin G2 = (15S)-15-hydroperoxy-prostaglandin E2. The enzyme catalyses 1-chloro-2,4-dinitrobenzene + glutathione = 2,4-dinitrophenyl-S-glutathione + chloride + H(+). It catalyses the reaction (5S)-hydroperoxy-(6E,8Z,11Z,14Z)-eicosatetraenoate + 2 glutathione = (5S)-hydroxy-(6E,8Z,11Z,14Z)-eicosatetraenoate + glutathione disulfide + H2O. It participates in lipid metabolism; prostaglandin biosynthesis. Functionally, terminal enzyme of the cyclooxygenase (COX)-2-mediated prostaglandin E2 (PGE2) biosynthetic pathway. Catalyzes the glutathione-dependent oxidoreduction of prostaglandin endoperoxide H2 (PGH2) to prostaglandin E2 (PGE2) in response to inflammatory stimuli. Plays a key role in inflammation response, fever and pain. Also catalyzes the oxidoreduction of endocannabinoids into prostaglandin glycerol esters and PGG2 into 15-hydroperoxy-PGE2. In addition, displays low glutathione transferase and glutathione-dependent peroxidase activities, toward 1-chloro-2,4-dinitrobenzene and 5-hydroperoxyicosatetraenoic acid (5-HPETE), respectively. This Macaca fascicularis (Crab-eating macaque) protein is Prostaglandin E synthase (PTGES).